The following is a 303-amino-acid chain: UDP-N-acetylenolpyruvoylglucosamine reductase (303 aa).

In terms of domain architecture, FAD-binding PCMH-type spans 27–207 (KVGGISQVFY…TSISQKLQKI (181 aa)). R175 is a catalytic residue. S224 serves as the catalytic Proton donor. E294 is an active-site residue.

The protein belongs to the MurB family. Requires FAD as cofactor.

The protein resides in the cytoplasm. It carries out the reaction UDP-N-acetyl-alpha-D-muramate + NADP(+) = UDP-N-acetyl-3-O-(1-carboxyvinyl)-alpha-D-glucosamine + NADPH + H(+). It participates in cell wall biogenesis; peptidoglycan biosynthesis. Functionally, cell wall formation. This chain is UDP-N-acetylenolpyruvoylglucosamine reductase, found in Orientia tsutsugamushi (strain Boryong) (Rickettsia tsutsugamushi).